Here is a 215-residue protein sequence, read N- to C-terminus: Heart- and neural crest derivatives-expressed protein 1 (215 aa).

2 disordered regions span residues 53-109 and 166-198; these read APDF…RTES and LKKA…EKRI. Low complexity predominate over residues 65-89; the sequence is AAAAATAYGPDARPGQSPGRLEALG. A compositionally biased stretch (basic residues) spans 92–104; it reads LGRRKGSGPKKER. The bHLH domain occupies 94 to 146; it reads RRKGSGPKKERRRTESINSAFAELRECIPNVPADTKLSKIKTLRLATSYIAYL. T107 is modified (phosphothreonine; by PLK4). S109 is subject to Phosphoserine; by PLK4.

In terms of assembly, efficient DNA binding requires dimerization with another bHLH protein. Forms homodimers and heterodimers with TCF3 gene products E12 and E47, HAND2 and HEY1, HEY2 and HEYL (hairy-related transcription factors). Interacts with MDFIC. Interacts with SOX15; the interaction enhances HAND1-induced differentiation of trophoblast giant cells. Post-translationally, phosphorylation by PLK4 disrupts the interaction with MDFIC and leads to translocation into the nucleoplasm, allowing dimerization and transcription factor activity. Heart.

It localises to the nucleus. It is found in the nucleoplasm. The protein localises to the nucleolus. In terms of biological role, transcription factor that plays an essential role in both trophoblast giant cell differentiation and in cardiac morphogenesis. Binds the DNA sequence 5'-NRTCTG-3' (non-canonical E-box). Acts as a transcriptional repressor of SOX15. In the adult, could be required for ongoing expression of cardiac-specific genes. The polypeptide is Heart- and neural crest derivatives-expressed protein 1 (HAND1) (Homo sapiens (Human)).